A 425-amino-acid polypeptide reads, in one-letter code: Pyruvate dehydrogenase E1 component subunit alpha-3, chloroplastic (425 aa).

The N-terminal 66 residues, 1–66 (MAAASSFTAA…VLPGNKAAPA (66 aa)), are a transit peptide targeting the chloroplast. The pyruvate site is built by H109, Y135, R136, A184, I186, D224, G225, and N253. Residues Y135, R136, A184, I186, D224, G225, N253, and H322 each contribute to the thiamine diphosphate site. Residue D224 participates in Mg(2+) binding. Position 253 (N253) interacts with Mg(2+).

In terms of assembly, tetramer of 2 alpha and 2 beta subunits. Requires thiamine diphosphate as cofactor. The cofactor is Mg(2+).

It localises to the plastid. The protein localises to the chloroplast. It catalyses the reaction N(6)-[(R)-lipoyl]-L-lysyl-[protein] + pyruvate + H(+) = N(6)-[(R)-S(8)-acetyldihydrolipoyl]-L-lysyl-[protein] + CO2. Functionally, the pyruvate dehydrogenase complex catalyzes the overall conversion of pyruvate to acetyl-CoA and CO(2). It contains multiple copies of three enzymatic components: pyruvate dehydrogenase (E1), dihydrolipoamide acetyltransferase (E2) and lipoamide dehydrogenase (E3). This Oryza sativa subsp. japonica (Rice) protein is Pyruvate dehydrogenase E1 component subunit alpha-3, chloroplastic.